Consider the following 339-residue polypeptide: Uroporphyrinogen decarboxylase (339 aa).

Residues Arg21–Arg25, Phe40, Asp71, Tyr147, Ser202, and His315 contribute to the substrate site.

The protein belongs to the uroporphyrinogen decarboxylase family. As to quaternary structure, homodimer.

The protein localises to the cytoplasm. It carries out the reaction uroporphyrinogen III + 4 H(+) = coproporphyrinogen III + 4 CO2. Its pathway is porphyrin-containing compound metabolism; protoporphyrin-IX biosynthesis; coproporphyrinogen-III from 5-aminolevulinate: step 4/4. In terms of biological role, catalyzes the decarboxylation of four acetate groups of uroporphyrinogen-III to yield coproporphyrinogen-III. The polypeptide is Uroporphyrinogen decarboxylase (Helicobacter pylori (strain J99 / ATCC 700824) (Campylobacter pylori J99)).